The sequence spans 333 residues: Ketol-acid reductoisomerase (NADP(+)) (333 aa).

Residues 2-182 (AELFYDADAD…GGTRAGVIKT (181 aa)) enclose the KARI N-terminal Rossmann domain. Residues 25-28 (YGSQ), S51, S53, and 83-86 (DPIQ) each bind NADP(+). The active site involves H108. Residue G134 participates in NADP(+) binding. Positions 183-328 (TFTEETETDL…KELRKLMSWV (146 aa)) constitute a KARI C-terminal knotted domain. Positions 191, 195, 227, and 231 each coordinate Mg(2+). A substrate-binding site is contributed by S252.

The protein belongs to the ketol-acid reductoisomerase family. Mg(2+) is required as a cofactor.

The catalysed reaction is (2R)-2,3-dihydroxy-3-methylbutanoate + NADP(+) = (2S)-2-acetolactate + NADPH + H(+). The enzyme catalyses (2R,3R)-2,3-dihydroxy-3-methylpentanoate + NADP(+) = (S)-2-ethyl-2-hydroxy-3-oxobutanoate + NADPH + H(+). The protein operates within amino-acid biosynthesis; L-isoleucine biosynthesis; L-isoleucine from 2-oxobutanoate: step 2/4. It functions in the pathway amino-acid biosynthesis; L-valine biosynthesis; L-valine from pyruvate: step 2/4. Functionally, involved in the biosynthesis of branched-chain amino acids (BCAA). Catalyzes an alkyl-migration followed by a ketol-acid reduction of (S)-2-acetolactate (S2AL) to yield (R)-2,3-dihydroxy-isovalerate. In the isomerase reaction, S2AL is rearranged via a Mg-dependent methyl migration to produce 3-hydroxy-3-methyl-2-ketobutyrate (HMKB). In the reductase reaction, this 2-ketoacid undergoes a metal-dependent reduction by NADPH to yield (R)-2,3-dihydroxy-isovalerate. The chain is Ketol-acid reductoisomerase (NADP(+)) from Streptomyces avermitilis (strain ATCC 31267 / DSM 46492 / JCM 5070 / NBRC 14893 / NCIMB 12804 / NRRL 8165 / MA-4680).